A 260-amino-acid polypeptide reads, in one-letter code: Thiamine thiazole synthase (260 aa).

NAD(+) is bound by residues alanine 36, 55–56, glycine 63, and 154–156; these read EQ and HVD. The Fe cation site is built by aspartate 156 and histidine 171. Methionine 224 contacts NAD(+). Residue arginine 234 participates in glycine binding.

It belongs to the THI4 family. As to quaternary structure, homooctamer; tetramer of dimers. It depends on Fe(2+) as a cofactor.

The catalysed reaction is hydrogen sulfide + glycine + NAD(+) = ADP-5-ethyl-4-methylthiazole-2-carboxylate + nicotinamide + 3 H2O + H(+). The protein operates within cofactor biosynthesis; thiamine diphosphate biosynthesis. Involved in the biosynthesis of the thiazole moiety of thiamine. Catalyzes the conversion of NAD and glycine to adenosine diphosphate 5-(2-hydroxyethyl)-4-methylthiazole-2-carboxylate (ADT), an adenylated thiazole intermediate, using free sulfide as a source of sulfur. The polypeptide is Thiamine thiazole synthase (Methanosarcina mazei (strain ATCC BAA-159 / DSM 3647 / Goe1 / Go1 / JCM 11833 / OCM 88) (Methanosarcina frisia)).